The sequence spans 340 residues: UDP-3-O-acylglucosamine N-acyltransferase (340 aa).

Histidine 240 serves as the catalytic Proton acceptor.

The protein belongs to the transferase hexapeptide repeat family. LpxD subfamily. As to quaternary structure, homotrimer.

It carries out the reaction a UDP-3-O-[(3R)-3-hydroxyacyl]-alpha-D-glucosamine + a (3R)-hydroxyacyl-[ACP] = a UDP-2-N,3-O-bis[(3R)-3-hydroxyacyl]-alpha-D-glucosamine + holo-[ACP] + H(+). It participates in bacterial outer membrane biogenesis; LPS lipid A biosynthesis. Its function is as follows. Catalyzes the N-acylation of UDP-3-O-acylglucosamine using 3-hydroxyacyl-ACP as the acyl donor. Is involved in the biosynthesis of lipid A, a phosphorylated glycolipid that anchors the lipopolysaccharide to the outer membrane of the cell. In Pseudoalteromonas translucida (strain TAC 125), this protein is UDP-3-O-acylglucosamine N-acyltransferase.